We begin with the raw amino-acid sequence, 300 residues long: Virginiamycin B lyase (300 aa).

Residue His231 coordinates substrate. Glu270 serves as a coordination point for Mg(2+). The active-site Proton acceptor is His272. Mg(2+) is bound at residue Glu287.

The protein belongs to the Vgb family. As to quaternary structure, monomer. Requires Mg(2+) as cofactor.

Its function is as follows. Inactivates the type B streptogramin antibiotics by linearizing the lactone ring at the ester linkage, generating a free phenylglycine carboxylate and converting the threonyl moiety into 2-amino-butenoic acid. This Saccharopolyspora erythraea (strain ATCC 11635 / DSM 40517 / JCM 4748 / NBRC 13426 / NCIMB 8594 / NRRL 2338) protein is Virginiamycin B lyase.